Reading from the N-terminus, the 121-residue chain is MQKRIEIQNASLTEDALRLKCGEDLSGAERKASGQMLVDSDHFAFVYILESADSFEYVIIKEHIWPDLKEALDQRKPAVLEAGGKTVELSGLHEELDYLLENIKDNANYGDMEEKVKNVFL.

Belongs to the UPF0738 family.

This chain is UPF0738 protein RBAM_011600, found in Bacillus velezensis (strain DSM 23117 / BGSC 10A6 / LMG 26770 / FZB42) (Bacillus amyloliquefaciens subsp. plantarum).